Reading from the N-terminus, the 152-residue chain is Superoxide dismutase [Cu-Zn] 1 (152 aa).

Cu cation is bound by residues H45, H47, and H62. A disulfide bond links C56 and C145. Positions 62, 70, 79, and 82 each coordinate Zn(2+). H119 lines the Cu cation pocket.

It belongs to the Cu-Zn superoxide dismutase family. Homodimer. Interacts with DJ1A and CCS. Cu cation serves as cofactor. Zn(2+) is required as a cofactor. As to expression, expressed in leaves (at protein level). The spatial localization is regulated by miR398-mediated silencing. Mostly present in flowers, old rosette leaves and inflorescence, and, to a lower extent, in cauline leaves, stems and roots.

It localises to the cytoplasm. Its subcellular location is the cytosol. The protein resides in the nucleus. The catalysed reaction is 2 superoxide + 2 H(+) = H2O2 + O2. Its function is as follows. Destroys radicals which are normally produced within the cells and which are toxic to biological systems. The chain is Superoxide dismutase [Cu-Zn] 1 (CSD1) from Arabidopsis thaliana (Mouse-ear cress).